The primary structure comprises 113 residues: Small ribosomal subunit protein uS17 (113 aa).

This sequence belongs to the universal ribosomal protein uS17 family. In terms of assembly, part of the 30S ribosomal subunit.

In terms of biological role, one of the primary rRNA binding proteins, it binds specifically to the 5'-end of 16S ribosomal RNA. This Pyrococcus abyssi (strain GE5 / Orsay) protein is Small ribosomal subunit protein uS17.